A 219-amino-acid chain; its full sequence is Cytochrome c biogenesis ATP-binding export protein CcmA (219 aa).

The ABC transporter domain maps to 10–218 (ISAVNLTCIR…TLDYSYDSAV (209 aa)). ATP is bound at residue 42–49 (GPNGSGKT).

This sequence belongs to the ABC transporter superfamily. CcmA exporter (TC 3.A.1.107) family. As to quaternary structure, the complex is composed of two ATP-binding proteins (CcmA) and two transmembrane proteins (CcmB).

The protein resides in the cell inner membrane. The enzyme catalyses heme b(in) + ATP + H2O = heme b(out) + ADP + phosphate + H(+). Part of the ABC transporter complex CcmAB involved in the biogenesis of c-type cytochromes; once thought to export heme, this seems not to be the case, but its exact role is uncertain. Responsible for energy coupling to the transport system. The protein is Cytochrome c biogenesis ATP-binding export protein CcmA of Colwellia psychrerythraea (strain 34H / ATCC BAA-681) (Vibrio psychroerythus).